The primary structure comprises 591 residues: Vomeromodulin (591 aa).

The first 18 residues, 1–18 (MWVLQALAIMLSIQAGTL), serve as a signal peptide directing secretion. Residues 151–172 (NEGNGDSSKPSSGSKATGGLGQ) form a disordered region. N-linked (GlcNAc...) asparagine glycans are attached at residues N421 and N516.

Post-translationally, N-glycosylated. The N-glycans consist mainly of complex sialylated and fucosylated biantennary structures. Expressed in lung. Not detected in other tissues tested (at protein level).

It localises to the secreted. This chain is Vomeromodulin, found in Mus musculus (Mouse).